The following is a 320-amino-acid chain: Sliding-clamp-loader large subunit (320 aa).

ATP is bound by residues 12-15, Ile24, 53-58, and Arg205; these read EQKY and GTGKTT.

It belongs to the Tevenvirinae sliding-clamp-loader large subunit family. The sliding-clamp-loader consists of 4 large subunits and 1 small subunit. Interacts with the sliding clamp; this interaction allows the sliding-clamp-loader to open the sliding clamp. Part of the replicase complex that includes the DNA polymerase, the polymerase clamp, the clamp loader complex, the single-stranded DNA binding protein, the primase, the helicase and the helicase assembly factor.

Its function is as follows. Forms the sliding-clamp-loader together with the small subunit. Functions as an ATPase enzyme. The clamp loader holds the clamp in an open conformation and places it onto the DNA. 4 ATP molecules must bind to the sliding-clamp-loader before the latter can open the sliding clamp. ATP hydrolysis triggers the detachment of the sliding clamp from the sliding-clamp-loader, freeing the sliding clamp to track along DNA. The protein is Sliding-clamp-loader large subunit (44) of Escherichia phage RB69 (Bacteriophage RB69).